Consider the following 156-residue polypeptide: Small ribosomal subunit protein uS7 (156 aa).

Belongs to the universal ribosomal protein uS7 family. In terms of assembly, part of the 30S ribosomal subunit. Contacts proteins S9 and S11.

Its function is as follows. One of the primary rRNA binding proteins, it binds directly to 16S rRNA where it nucleates assembly of the head domain of the 30S subunit. Is located at the subunit interface close to the decoding center, probably blocks exit of the E-site tRNA. The chain is Small ribosomal subunit protein uS7 from Cutibacterium acnes (strain DSM 16379 / KPA171202) (Propionibacterium acnes).